A 1071-amino-acid chain; its full sequence is Intracellular phospholipase A2 (1071 aa).

A disordered region spans residues 1-22 (MTTTNKDGPFRQQYLPGVHKEP). ANK repeat units lie at residues 411 to 440 (ENCY…TLFC), 479 to 508 (DGQS…KFTR), 510 to 539 (DRNE…EIAN), 544 to 570 (LGNS…ELGL), 578 to 610 (AGET…NMNA), 614 to 651 (HGNT…KINL), and 652 to 681 (RGES…TRCP). The region spanning 748–921 (ISMDGGGIRG…ISNNPALDLM (174 aa)) is the PNPLA domain. A GXGXXG motif is present at residues 752 to 757 (GGGIRG). The GXSXG signature appears at 784-788 (GTSTG). Serine 786 (nucleophile) is an active-site residue. Aspartate 908 (proton acceptor) is an active-site residue. Positions 908–910 (DGG) match the DGA/G motif.

The protein belongs to the patatin family.

The enzyme catalyses a 1,2-diacyl-sn-glycero-3-phosphocholine + H2O = a 1-acyl-sn-glycero-3-phosphocholine + a fatty acid + H(+). Functionally, phospholipase that plays a critical role during oogenesis, ovulation, and/or embryogenesis. This is Intracellular phospholipase A2 from Caenorhabditis elegans.